Consider the following 294-residue polypeptide: uncharacterized protein (294 aa).

The N-terminal stretch at 1–16 (MQNFMVLLLLIVAVVA) is a signal peptide. N25 and N162 each carry an N-linked (GlcNAc...) asparagine; by host glycan.

This is an uncharacterized protein from Acheta domesticus (House cricket).